The sequence spans 326 residues: L-lactate dehydrogenase (326 aa).

39–60 (DVVTGMPEGKALDDSQATSIAD) serves as a coordination point for NAD(+). Substrate is bound by residues R99, N131, and R162. N131 is a binding site for NAD(+). The active-site Proton acceptor is the H186.

Belongs to the LDH/MDH superfamily. LDH family. In terms of assembly, homotetramer.

The catalysed reaction is (S)-lactate + NAD(+) = pyruvate + NADH + H(+). The protein operates within fermentation; pyruvate fermentation to lactate; (S)-lactate from pyruvate: step 1/1. The protein is L-lactate dehydrogenase of Toxoplasma gondii.